The primary structure comprises 448 residues: UDP-N-acetylmuramoylalanine--D-glutamate ligase (448 aa).

The UDP-N-acetyl-alpha-D-muramoyl-L-alanine site is built by Lys17, Ser18, Thr38, Arg39, and Gly78. ATP is bound at residue 116-122; sequence GSNAKST. Ala119, Lys120, Ser121, and Thr122 together coordinate ADP. UDP-N-acetyl-alpha-D-muramoyl-L-alanine contacts are provided by Asn143 and His188. 4 residues coordinate ADP: Asn278, Arg309, Asp324, and Lys326.

This sequence belongs to the MurCDEF family.

The protein resides in the cytoplasm. It catalyses the reaction UDP-N-acetyl-alpha-D-muramoyl-L-alanine + D-glutamate + ATP = UDP-N-acetyl-alpha-D-muramoyl-L-alanyl-D-glutamate + ADP + phosphate + H(+). Its pathway is cell wall biogenesis; peptidoglycan biosynthesis. In terms of biological role, involved in cell wall formation. Catalyzes the addition of D-glutamate to the peptidoglycan precursor UDP-N-acetylmuramoyl-L-alanine (UMA). This is UDP-N-acetylmuramoylalanine--D-glutamate ligase from Pseudomonas aeruginosa (strain ATCC 15692 / DSM 22644 / CIP 104116 / JCM 14847 / LMG 12228 / 1C / PRS 101 / PAO1).